Reading from the N-terminus, the 406-residue chain is Peptidase T (406 aa).

His-81 contacts Zn(2+). Residue Asp-83 is part of the active site. Position 142 (Asp-142) interacts with Zn(2+). Glu-176 (proton acceptor) is an active-site residue. Zn(2+)-binding residues include Glu-177, Asp-199, and His-381.

The protein belongs to the peptidase M20B family. It depends on Zn(2+) as a cofactor.

It is found in the cytoplasm. It carries out the reaction Release of the N-terminal residue from a tripeptide.. Functionally, cleaves the N-terminal amino acid of tripeptides. In Streptococcus suis (strain 98HAH33), this protein is Peptidase T.